Consider the following 171-residue polypeptide: Apoptosis regulator Bcl-2 homolog (171 aa).

In terms of assembly, interacts with host BECN1; this interaction inhibits host autophagy. Interacts with host BAK1 and BAX.

It localises to the host cytoplasm. Plays a role in the protection against apoptosis mediated by cytotoxic cells during the immune response to acute and persistent viral infection. Contributes therefore to latency establishment. Plays also a role in the inhibition of host starvation-induced autophagy which ultimately contributes to the viral chronic infection. In Murid herpesvirus 4 (MuHV-4), this protein is Apoptosis regulator Bcl-2 homolog (vBCL2).